A 352-amino-acid chain; its full sequence is Dead end protein homolog 1 (352 aa).

RRM domains follow at residues 58–136 and 138–218; these read SEVY…RSTE and CELT…WLKP. R336 is subject to Omega-N-methylarginine.

Interacts with APOBEC3. Isoform 1 and isoform 2 are expressed in testis. Isoform 1 is expressed continuously in post natal (PN) testis although levels are low between PN1 to PN6. Isoform 2 is expressed from PN 20 onwards. Isoform 2 is strongly expressed in meiotic and in post-meiotic germ cells of the testis with highest expression at the elongated spermatid stage (at protein level). Expressed in testis and heart. Expressed in germ cells and genital ridges. Not detected in testicular tumors.

It is found in the nucleus. The protein localises to the cytoplasm. Its function is as follows. RNA-binding factor that positively regulates gene expression by prohibiting miRNA-mediated gene suppression. Relieves miRNA repression in germline cells. Prohibits the function of several miRNAs by blocking the accessibility of target mRNAs. Sequence-specific RNA-binding factor that binds specifically to U-rich regions (URRs) in the 3' untranslated region (3'-UTR) of several mRNAs. Does not bind to miRNAs. Isoform 1 may play a role during primordial germ cell (PGC) survival. However, does not seem to be essential for PGC migration. In Mus musculus (Mouse), this protein is Dead end protein homolog 1 (Dnd1).